A 467-amino-acid polypeptide reads, in one-letter code: Ribulose bisphosphate carboxylase large chain (467 aa).

A propeptide spanning residues 1–2 is cleaved from the precursor; sequence MS. At Pro-3 the chain carries N-acetylproline. N6,N6,N6-trimethyllysine is present on Lys-14. Residues Asn-123 and Thr-173 each coordinate substrate. The Proton acceptor role is filled by Lys-175. Lys-177 provides a ligand contact to substrate. Mg(2+) is bound by residues Lys-201, Asp-203, and Glu-204. Position 201 is an N6-carboxylysine (Lys-201). The Proton acceptor role is filled by His-294. Substrate is bound by residues Arg-295, His-327, and Ser-379.

The protein belongs to the RuBisCO large chain family. Type I subfamily. Heterohexadecamer of 8 large chains and 8 small chains; disulfide-linked. The disulfide link is formed within the large subunit homodimers. It depends on Mg(2+) as a cofactor. Post-translationally, the disulfide bond which can form in the large chain dimeric partners within the hexadecamer appears to be associated with oxidative stress and protein turnover.

The protein localises to the plastid. It localises to the chloroplast. It carries out the reaction 2 (2R)-3-phosphoglycerate + 2 H(+) = D-ribulose 1,5-bisphosphate + CO2 + H2O. The enzyme catalyses D-ribulose 1,5-bisphosphate + O2 = 2-phosphoglycolate + (2R)-3-phosphoglycerate + 2 H(+). RuBisCO catalyzes two reactions: the carboxylation of D-ribulose 1,5-bisphosphate, the primary event in carbon dioxide fixation, as well as the oxidative fragmentation of the pentose substrate in the photorespiration process. Both reactions occur simultaneously and in competition at the same active site. The polypeptide is Ribulose bisphosphate carboxylase large chain (Phoenix reclinata (Senegal date palm)).